Here is a 120-residue protein sequence, read N- to C-terminus: Spermidine export protein MdtJ (120 aa).

4 helical membrane passes run 1-21 (MFYW…TLSM), 31-51 (AGFI…SFAV), 54-74 (IALG…ITIF), and 81-101 (EALS…IVLI).

It belongs to the drug/metabolite transporter (DMT) superfamily. Small multidrug resistance (SMR) (TC 2.A.7.1) family. MdtJ subfamily. In terms of assembly, forms a complex with MdtI.

The protein resides in the cell inner membrane. Functionally, catalyzes the excretion of spermidine. The chain is Spermidine export protein MdtJ from Salmonella paratyphi A (strain ATCC 9150 / SARB42).